A 1023-amino-acid chain; its full sequence is Presequence protease, mitochondrial (1023 aa).

The transit peptide at 1-62 (MFRQSKTIIT…PDLFLTAVKL (62 aa)) directs the protein to the mitochondrion. A Zn(2+)-binding site is contributed by His-99. The active-site Proton acceptor is Glu-102. Residues His-103 and Glu-200 each contribute to the Zn(2+) site. Cys-114 and Cys-551 are disulfide-bonded.

Belongs to the peptidase M16 family. PreP subfamily. As to quaternary structure, monomer and homodimer; homodimerization is induced by binding of the substrate. Zn(2+) is required as a cofactor. A disulfide bond locks the enzyme in the closed conformation preventing substrate entry into the catalytic chamber.

The protein localises to the mitochondrion matrix. Mainly exists in a closed and catalytically competent conformation but a closed-to-open switch allows substrate entry into the catalytic chamber. Substrate binding induces closure and dimerization. A disulfide bond may lock the enzyme in a closed conformation preventing substrate entry into the catalytic chamber, participating in redox regulation of the enzyme. Inhibited by metal-chelating agents. Inhibited by nickel and zinc excess, and slightly activated by manganese. Functionally, metalloendopeptidase of the mitochondrial matrix that functions in peptide cleavage and degradation rather than in protein processing. Has an ATP-independent activity. Specifically cleaves peptides in the range of 5 to 65 residues. Shows a preference for cleavage after small polar residues and before basic residues, but without any positional preference. Degrades the transit peptides of mitochondrial proteins after their cleavage. Also degrades other unstructured peptides. The protein is Presequence protease, mitochondrial (pitrm1) of Danio rerio (Zebrafish).